The primary structure comprises 368 residues: Glutamate 5-kinase (368 aa).

Lys-18 provides a ligand contact to ATP. Ser-58, Asp-145, and Asn-157 together coordinate substrate. Residues 177-178 (SD) and 218-224 (TGGMASK) each bind ATP. The PUA domain maps to 280-358 (AGSLTLDEGA…SELPGELRRP (79 aa)).

It belongs to the glutamate 5-kinase family.

Its subcellular location is the cytoplasm. It carries out the reaction L-glutamate + ATP = L-glutamyl 5-phosphate + ADP. Its pathway is amino-acid biosynthesis; L-proline biosynthesis; L-glutamate 5-semialdehyde from L-glutamate: step 1/2. Its function is as follows. Catalyzes the transfer of a phosphate group to glutamate to form L-glutamate 5-phosphate. The chain is Glutamate 5-kinase from Mycobacterium ulcerans (strain Agy99).